We begin with the raw amino-acid sequence, 145 residues long: Large ribosomal subunit protein uL13 (145 aa).

The protein belongs to the universal ribosomal protein uL13 family. In terms of assembly, part of the 50S ribosomal subunit.

Its function is as follows. This protein is one of the early assembly proteins of the 50S ribosomal subunit, although it is not seen to bind rRNA by itself. It is important during the early stages of 50S assembly. The polypeptide is Large ribosomal subunit protein uL13 (Listeria innocua serovar 6a (strain ATCC BAA-680 / CLIP 11262)).